The following is a 688-amino-acid chain: Polyphosphate kinase (688 aa).

Asn45 provides a ligand contact to ATP. Residues Arg375 and Arg405 each contribute to the Mg(2+) site. A PLD phosphodiesterase domain is found at 430 to 464; sequence PGLKIHAKLFLISRKENGEVVRYAHIGTGNFNEKT. The Phosphohistidine intermediate role is filled by His435. The ATP site is built by Tyr468, Arg564, and His592.

The protein belongs to the polyphosphate kinase 1 (PPK1) family. Mg(2+) serves as cofactor. Post-translationally, an intermediate of this reaction is the autophosphorylated ppk in which a phosphate is covalently linked to a histidine residue through a N-P bond.

The enzyme catalyses [phosphate](n) + ATP = [phosphate](n+1) + ADP. Catalyzes the reversible transfer of the terminal phosphate of ATP to form a long-chain polyphosphate (polyP). The chain is Polyphosphate kinase from Escherichia coli O6:H1 (strain CFT073 / ATCC 700928 / UPEC).